The sequence spans 80 residues: MKEQKWIHEGLITESLPNGMFRVRLDNVDNEDLILGYVSGRIRRSFIRILPGDRVKIEVSRYDSTRGRIIYRLRNKDSND.

An S1-like domain is found at 1–74 (MKEQKWIHEG…TRGRIIYRLR (74 aa)).

This sequence belongs to the IF-1 family. Component of the 30S ribosomal translation pre-initiation complex which assembles on the 30S ribosome in the order IF-2 and IF-3, IF-1 and N-formylmethionyl-tRNA(fMet); mRNA recruitment can occur at any time during PIC assembly.

The protein resides in the plastid. It localises to the chloroplast. Functionally, one of the essential components for the initiation of protein synthesis. Stabilizes the binding of IF-2 and IF-3 on the 30S subunit to which N-formylmethionyl-tRNA(fMet) subsequently binds. Helps modulate mRNA selection, yielding the 30S pre-initiation complex (PIC). Upon addition of the 50S ribosomal subunit IF-1, IF-2 and IF-3 are released leaving the mature 70S translation initiation complex. The sequence is that of Translation initiation factor IF-1, chloroplastic from Illicium oligandrum (Star anise).